A 783-amino-acid polypeptide reads, in one-letter code: uncharacterized protein (783 aa).

Positions 40–66 (CFNCKARKVRCDGANPCKACASNNLEC) form a DNA-binding region, zn(2)-C6 fungal-type.

Its subcellular location is the cytoplasm. It localises to the nucleus. This is an uncharacterized protein from Schizosaccharomyces pombe (strain 972 / ATCC 24843) (Fission yeast).